The primary structure comprises 130 residues: Holo-[acyl-carrier-protein] synthase (130 aa).

Aspartate 8 and glutamate 62 together coordinate Mg(2+).

It belongs to the P-Pant transferase superfamily. AcpS family. Mg(2+) is required as a cofactor.

It is found in the cytoplasm. The enzyme catalyses apo-[ACP] + CoA = holo-[ACP] + adenosine 3',5'-bisphosphate + H(+). Its function is as follows. Transfers the 4'-phosphopantetheine moiety from coenzyme A to a Ser of acyl-carrier-protein. The polypeptide is Holo-[acyl-carrier-protein] synthase (Acidovorax ebreus (strain TPSY) (Diaphorobacter sp. (strain TPSY))).